The sequence spans 754 residues: Nibrin (754 aa).

The 60-residue stretch at 24-83 (YVVGRKNCAILIENDQSISRNHAVLTANFSVTNLSQTDEIPVLTLKDNSKYGTFVNEEKM) folds into the FHA domain. 2 BRCT domains span residues 105–181 (KFRI…TEFL) and 224–315 (GKTF…LAVI). The interval 111–328 (EPLVACSSCL…TKNYCDPQGH (218 aa)) is mediates interaction with SP100. Residues 221-402 (IFKGKTFIFL…FRMLSQDAPT (182 aa)) form an interaction with MTOR, MAPKAP1 and RICTOR region. Serine 278 is subject to Phosphoserine; by ATM. The segment at 326–346 (QGHPSTGLKTTTPGPSLSQGV) is disordered. The span at 328-346 (HPSTGLKTTTPGPSLSQGV) shows a compositional bias: polar residues. Threonine 337 is modified (phosphothreonine). The residue at position 343 (serine 343) is a Phosphoserine; by ATM. A Phosphoserine modification is found at serine 347. Lysine 388 carries the post-translational modification N6-lactoyllysine. Disordered stretches follow at residues 396–415 (LSQD…NNNS) and 430–478 (QLSP…MSSC). At serine 397 the chain carries Phosphoserine. A Phosphothreonine modification is found at threonine 402. 2 stretches are compositionally biased toward polar residues: residues 430-440 (QLSPTKLPSIN) and 447-462 (SQQQ…FQPS). Serine 432 is subject to Phosphoserine; by CDK2. Lysine 435 participates in a covalent cross-link: Glycyl lysine isopeptide (Lys-Gly) (interchain with G-Cter in ubiquitin). Positions 461 to 467 (PSTKKRE) match the Nuclear localization signal motif. 2 positions are modified to phosphoserine: serine 509 and serine 518. Residues lysine 529, lysine 571, and lysine 582 each participate in a glycyl lysine isopeptide (Lys-Gly) (interchain with G-Cter in SUMO2) cross-link. Residues serine 615 and serine 673 each carry the phosphoserine modification. Glycyl lysine isopeptide (Lys-Gly) (interchain with G-Cter in ubiquitin) cross-links involve residues lysine 686, lysine 690, and lysine 735. The FxF/Y motif motif lies at 740-749 (ADDLFRYNPY).

It belongs to the Nibrin family. Component of the MRN complex composed of two heterodimers RAD50 and MRE11 associated with a single NBN. The MRN complexes dimerize on DNA to form joined MRN-MRN oligomers required for DNA double-strand break repair. As part of the MRN complex, interacts with MCM9; the interaction recruits the complex to DNA repair sites. Component of the BASC complex, at least composed of BRCA1, MSH2, MSH6, MLH1, ATM, BLM, RAD50, MRE11 and NBN. Interacts with histone H2AX; this requires phosphorylation of H2AX on 'Ser-139' and promotes NBN recruitment to DNA damage sites. Interacts with (phosphorylated) MDC1; promoting NBN recruitment to DNA damage sites. Interacts with (phosphorylated) RAD17; promoting NBN recruitment to DNA damage sites. Interacts (via FxF/Y motif) with ATM. Interacts with HJURP. Interacts with INTS3. Interacts with KPNA2. Interacts with TERF2; interaction is disrupted upon NBN phosphorylation by CDK2. Interacts with (phosphorylated) RBBP8/CtIP; the interaction links the role of the MRN complex in DNA double-strand break sensing to resection. Interacts with SP100; recruits NBN to PML bodies. Interacts with ATF2. Interacts with MTOR, MAPKAP1 isoform 2 and RICTOR; indicative for an association with the mTORC2 complex. Interacts with MRNIP. Interacts with UFL1; promoting UFL1 recruitment to double-strand breaks following DNA damage. Interacts with CYREN (via XLF motif). In terms of assembly, (Microbial infection) Interacts with herpes simplex virus 1 protein UL12. Phosphorylated by ATM in response of ionizing radiation, and such phosphorylation is responsible intra-S phase checkpoint control and telomere maintenance. Phosphorylated at Ser-432 by CDK2 in S/G2 phases abolishes interaction with TERF2, enabling DCLRE1B/Apollo recruitment to telomeres. Phosphorylation at Ser-432 in response to dysfunctional telomeres promotes non-homologous end joining repair at telomeres, while dephosphorylation by PPP1CA promotes microhomology-mediated end-joining (MMEJ) repair. In terms of processing, ubiquitinated at Lys-435 via 'Lys-6'-linked ubiquitin chains by RNF8, promoting NBN recruitment to DNA double-strand breaks (DSBs). Ubiquitinated at Lys-686 and Lys-689 via 'Lys-63'-linked ubiquitin chains by PELI1: ubiquitination takes place following PELI1 phosphorylation and promotes ATM activation and DNA repair. Ubiquitinated at Lys-735 via 'Lys-63'-linked ubiquitin chains by the SCF(SKP2) complex: ubiquitination takes place following SKP2 phosphorylation and promotes ATM activation and DNA repair. Post-translationally, lactylation at Lys-388 by KAT5 in response to DNA damage promotes recruitment of the MRN complex to DNA damage sites. Delactylated by HDAC3. Ubiquitous. Expressed at high levels in testis.

It is found in the nucleus. The protein resides in the chromosome. The protein localises to the PML body. It localises to the telomere. Component of the MRN complex, which plays a central role in double-strand break (DSB) repair, DNA recombination, maintenance of telomere integrity and meiosis. The MRN complex is involved in the repair of DNA double-strand breaks (DSBs) via homologous recombination (HR), an error-free mechanism which primarily occurs during S and G2 phases. The complex (1) mediates the end resection of damaged DNA, which generates proper single-stranded DNA, a key initial steps in HR, and is (2) required for the recruitment of other repair factors and efficient activation of ATM and ATR upon DNA damage. The MRN complex possesses single-strand endonuclease activity and double-strand-specific 3'-5' exonuclease activity, which are provided by MRE11, to initiate end resection, which is required for single-strand invasion and recombination. Within the MRN complex, NBN acts as a protein-protein adapter, which specifically recognizes and binds phosphorylated proteins, promoting their recruitment to DNA damage sites. Recruits MRE11 and RAD50 components of the MRN complex to DSBs in response to DNA damage. Promotes the recruitment of PI3/PI4-kinase family members ATM, ATR, and probably DNA-PKcs to the DNA damage sites, activating their functions. Mediates the recruitment of phosphorylated RBBP8/CtIP to DSBs, leading to cooperation between the MRN complex and RBBP8/CtIP to initiate end resection. RBBP8/CtIP specifically promotes the endonuclease activity of the MRN complex to clear DNA ends containing protein adducts. The MRN complex is also required for the processing of R-loops. NBN also functions in telomere length maintenance via its interaction with TERF2: interaction with TERF2 during G1 phase preventing recruitment of DCLRE1B/Apollo to telomeres. NBN also promotes DNA repair choice at dysfunctional telomeres: NBN phosphorylation by CDK2 promotes non-homologous end joining repair at telomeres, while unphosphorylated NBN promotes microhomology-mediated end-joining (MMEJ) repair. Enhances AKT1 phosphorylation possibly by association with the mTORC2 complex. In Homo sapiens (Human), this protein is Nibrin.